The sequence spans 410 residues: MYQSMNLSFSSNFTNLSFLKPRLYSGISARAPKSLHFKFNPSCVSSGPKSDDSPLSEKLISLLKAVPNWSDGIKERRMQQKRSLYTHENWVRHRSSLRHLRHVSSSPSSRVILSLIPPVFFFTTVAILIAGYNSAVDLDWLPDFFPVLRASPLPYQLTAPALALLLVFRTEASYSRFEQGRKAWVKIISGTNDLARLVISSVHGSGDELIIRDALLRYIVAFPVALKCHVIYGSDIASDLKNVIEVDDLSLILQSKHRPRCVIQFISQSLQLLNLDSTKIDMLETKMMQLQEGIGVCEQLMGIPIPLSYTRLTSRFLVLWHLTLPVILWDDCHWNVVPATFISAASLFCIEEVGVLIEEPFSMLALDELCAMVLSNSDEAVESKEVIRNRIIAKKRILEIKHSSNGWHKS.

Topologically, residues 1 to 110 are lumenal, thylakoid; the sequence is MYQSMNLSFS…RHVSSSPSSR (110 aa). A helical membrane pass occupies residues 111-131; that stretch reads VILSLIPPVFFFTTVAILIAG. Residues 132-147 are Stromal-facing; it reads YNSAVDLDWLPDFFPV. A helical transmembrane segment spans residues 148–168; that stretch reads LRASPLPYQLTAPALALLLVF. The Lumenal, thylakoid segment spans residues 169 to 315; sequence RTEASYSRFE…PLSYTRLTSR (147 aa). Transmembrane regions (helical) follow at residues 316–336 and 337–357; these read FLVL…HWNV and VPAT…GVLI. The Lumenal, thylakoid portion of the chain corresponds to 358–410; sequence EEPFSMLALDELCAMVLSNSDEAVESKEVIRNRIIAKKRILEIKHSSNGWHKS.

The protein belongs to the anion channel-forming bestrophin (TC 1.A.46) family. Voltage-dependent chloride channel subfamily. As to expression, mostly expressed in flowers and, to a lower extent, in leaves, stems and roots.

Its subcellular location is the plastid. It localises to the chloroplast thylakoid membrane. It catalyses the reaction chloride(in) = chloride(out). Functionally, voltage-dependent chloride (Cl) channel probably contributing to proton motive force (PMF) partitioning across the thylakoid membrane by anion influx into the lumen. Influences thylakoid ultrastructure, including lumen size and organization. This is Voltage-dependent chloride channel 2, chloroplastic from Arabidopsis thaliana (Mouse-ear cress).